Here is a 106-residue protein sequence, read N- to C-terminus: uncharacterized protein (106 aa).

This is an uncharacterized protein from Methanocaldococcus jannaschii (strain ATCC 43067 / DSM 2661 / JAL-1 / JCM 10045 / NBRC 100440) (Methanococcus jannaschii).